A 278-amino-acid polypeptide reads, in one-letter code: Protein saf1 (278 aa).

Disordered regions lie at residues methionine 1 to serine 43, lysine 81 to glutamate 210, and glutamine 240 to aspartate 264. Basic and acidic residues-rich tracts occupy residues glutamine 22–serine 38 and glycine 90–glutamine 103. 2 stretches are compositionally biased toward basic residues: residues histidine 104–lysine 116 and arginine 169–lysine 183. Residues isoleucine 186–alanine 202 are compositionally biased toward polar residues.

Its subcellular location is the nucleus. It localises to the nucleolus. The sequence is that of Protein saf1 (saf1) from Schizosaccharomyces pombe (strain 972 / ATCC 24843) (Fission yeast).